The sequence spans 135 residues: Large ribosomal subunit protein uL16m (135 aa).

Belongs to the universal ribosomal protein uL16 family.

It localises to the mitochondrion. In Marchantia polymorpha (Common liverwort), this protein is Large ribosomal subunit protein uL16m (RPL16).